The chain runs to 165 residues: Phosphopantetheine adenylyltransferase (165 aa).

S10 serves as a coordination point for substrate. Residues 10-11 (SF) and H18 contribute to the ATP site. Substrate-binding residues include K42, L74, and R88. ATP-binding positions include 89–91 (GLR), E99, and 124–130 (YSFISSS).

The protein belongs to the bacterial CoaD family. In terms of assembly, homohexamer. It depends on Mg(2+) as a cofactor.

The protein resides in the cytoplasm. It catalyses the reaction (R)-4'-phosphopantetheine + ATP + H(+) = 3'-dephospho-CoA + diphosphate. It functions in the pathway cofactor biosynthesis; coenzyme A biosynthesis; CoA from (R)-pantothenate: step 4/5. Its function is as follows. Reversibly transfers an adenylyl group from ATP to 4'-phosphopantetheine, yielding dephospho-CoA (dPCoA) and pyrophosphate. The protein is Phosphopantetheine adenylyltransferase of Macrococcus caseolyticus (strain JCSC5402) (Macrococcoides caseolyticum).